The sequence spans 183 residues: MDADSDVALDILITNVVCVFRTRCHLNLRKIALEGANVIYKRDVGKVLMKLRKPRITATIWSSGKVICTGATSEEEAKFGARRLARCLQKLGFQVIFTDFKVVNVLAVCNMPFEIRLPEFTKNNRPHASYEPELHPAVCYRIKTLRATLQIFSTGSITVTGPNVKAVASAVEQIYPFVFESRK.

It belongs to the TBP family. In terms of assembly, binds TFIIA and TFIIB. In terms of tissue distribution, present in the brain, heart, liver and gizzard.

It localises to the cytoplasm. The protein resides in the nucleus. In terms of biological role, part of a specialized transcription system that mediates the transcription of most ribosomal proteins through the 5'-TCT-3' motif which is a core promoter element at these genes. Seems to also mediate the transcription of NF1. Does not bind the TATA box. The chain is TATA box-binding protein-like 1 (TBPL1) from Gallus gallus (Chicken).